Reading from the N-terminus, the 498-residue chain is Calcitonin receptor (498 aa).

Positions 1–29 are cleaved as a signal peptide; that stretch reads MRFTLTRWCLTLFIFLNRPLPVLPDSADG. The Extracellular segment spans residues 30 to 147; sequence AHTPTLEPEP…FTPDKLQNAY (118 aa). Disulfide bonds link Cys56–Cys82, Cys73–Cys113, and Cys96–Cys135. N-linked (GlcNAc...) asparagine glycosylation is found at Asn74, Asn126, and Asn131. The chain crosses the membrane as a helical span at residues 148 to 170; the sequence is ILYYLAIVGHSLSILTLLISLGI. The Cytoplasmic portion of the chain corresponds to 171–198; the sequence is FMFLRYFNLLAPFNALLYPTRSISCQRV. Residues 199–219 traverse the membrane as a helical segment; that stretch reads TLHKNMFLTYVLNSIIIIVHL. Over 220-236 the chain is Extracellular; that stretch reads VVIVPNGELVKRDPPIC. An intrachain disulfide couples Cys236 to Cys306. Residues 237-259 form a helical membrane-spanning segment; the sequence is KVLHFFHQYMMSCNYFWMLCEGV. Residues 260–276 lie on the Cytoplasmic side of the membrane; the sequence is YLHTLIVVSVFAEGQRL. A helical membrane pass occupies residues 277 to 297; that stretch reads WWYHVLGWGFPLIPTTAHAIT. The Extracellular segment spans residues 298–313; the sequence is RAVLFNDNCWLSVDTN. Residues 314-337 traverse the membrane as a helical segment; sequence LLYIIHGPVMAALVVNFFFLLNIL. The Cytoplasmic segment spans residues 338–357; it reads RVLVKKLKESQEAESHMYLK. A helical transmembrane segment spans residues 358-376; sequence AVRATLILVPLLGVQFVVL. Topologically, residues 377-384 are extracellular; the sequence is PWRPSTPL. Residues 385–411 form a helical membrane-spanning segment; sequence LGKIYDYVVHSLIHFQGFFVAIIYCFC. Residues 412–498 are Cytoplasmic-facing; sequence NHEVQGALKR…MEVLEQETSA (87 aa).

This sequence belongs to the G-protein coupled receptor 2 family. In terms of assembly, heterodimer of CALCR and RAMP1, RAMP2 or RAMP3; the receptor complexes function as AMYR1, AMYR2 and AMYR3 receptors, respectively, and respond to amylin/IAPP, calcitonin/CT and CGRP1 ligands. Interacts with GPRASP2.

It localises to the cell membrane. G protein-coupled receptor activated by ligand peptides amylin (IAPP), calcitonin (CT/CALCA) and calcitonin gene-related peptide type 1 (CGRP1/CALCA). CALCR interacts with receptor-activity-modifying proteins RAMP1, 2 and 3 to form receptor complexes AMYR1, 2 and 3, respectively. IAPP, CT and CGRP1 activate CALCR and AMYRs with distinct modes of receptor activation resulting in specific phenotypes. Ligand binding causes a conformation change that triggers signaling via guanine nucleotide-binding proteins (G proteins) and modulates the activity of downstream effectors. Activates cAMP-dependent pathway. The protein is Calcitonin receptor of Sus scrofa (Pig).